Consider the following 197-residue polypeptide: dTTP/UTP pyrophosphatase (197 aa).

Asp70 serves as the catalytic Proton acceptor.

This sequence belongs to the Maf family. YhdE subfamily. A divalent metal cation is required as a cofactor.

It localises to the cytoplasm. It carries out the reaction dTTP + H2O = dTMP + diphosphate + H(+). The catalysed reaction is UTP + H2O = UMP + diphosphate + H(+). Nucleoside triphosphate pyrophosphatase that hydrolyzes dTTP and UTP. May have a dual role in cell division arrest and in preventing the incorporation of modified nucleotides into cellular nucleic acids. The chain is dTTP/UTP pyrophosphatase from Methanosarcina mazei (strain ATCC BAA-159 / DSM 3647 / Goe1 / Go1 / JCM 11833 / OCM 88) (Methanosarcina frisia).